A 281-amino-acid chain; its full sequence is Leukocyte antigen CD37 (281 aa).

Residues 1–17 lie on the Cytoplasmic side of the membrane; that stretch reads MSAQESCLSLIKYFLFV. The helical transmembrane segment at 18–38 threads the bilayer; the sequence is FNLFFFVLGGLIFCFGTWILI. Residues 39–59 lie on the Extracellular side of the membrane; the sequence is DKTSFVSFVGLSFVPLQTWSK. The helical transmembrane segment at 60 to 74 threads the bilayer; the sequence is VLAVSGVLTMALALL. Residues 75 to 85 lie on the Cytoplasmic side of the membrane; sequence GCVGALKELRC. The helical transmembrane segment at 86–111 threads the bilayer; it reads LLGLYFGMLLLLFATQITLGILISTQ. Residues 112–241 are Extracellular-facing; it reads RVRLERRVQE…QSLQKWLHNN (130 aa). N-linked (GlcNAc...) asparagine glycans are attached at residues N170, N183, and N188. A helical membrane pass occupies residues 242–266; that stretch reads IISIVGICLGVGLLELGFMTLSIFL. At 267 to 281 the chain is on the cytoplasmic side; the sequence is CRNLDHVYDRLARYR.

This sequence belongs to the tetraspanin (TM4SF) family. In terms of assembly, interacts with SCIMP. Interacts with SOCS3. Interacts with DECTIN1/CLEC7A. Post-translationally, tyrosine phosphorylated; leading to activation of downstream signaling pathways.

The protein localises to the cell membrane. In terms of biological role, structural component of specialized membrane microdomains known as tetraspanin-enriched microdomains (TERMs), which act as platforms for receptor clustering and signaling. Participates thereby in diverse biological functions such as cell signal transduction, adhesion, migration and protein trafficking. Upon ligand binding, two signaling pathways are activated, one acting through phosphorylation by LYN leading to cell death or a survival pathway with activation of GSK3B. Plays an essential role for clustering of integrin ITGA4/ITGB1 and promotes its mobility in the plasma membrane of B-cells. In turn, participates in ITGA4/ITGB1 integrin-mediated antiapoptotic signaling through AKT. Also plays a role in the migration of dendritic cells and neutrophils to draining lymph nodes, as well as in their integrin-mediated adhesion. Negatively regulates IL-6 responses through direct interaction with SOCS3 thereby preventing constitutive IL-6 signaling. Alternatively, inhibition of IL-6 signaling can also occur via interaction and stabilization of DECTIN1/CLEC7A at the cell membrane to inhibit its ability to promote the production of IL-6. This is Leukocyte antigen CD37 (Cd37) from Mus musculus (Mouse).